Reading from the N-terminus, the 975-residue chain is Exportin-2 (975 aa).

The 77-residue stretch at 29–105 (AEKLLESTEL…KTLIVTLMLH (77 aa)) folds into the Importin N-terminal domain.

Belongs to the XPO2/CSE1 family. Binds with high affinity to importin-alpha only in the presence of RanGTP.

Its subcellular location is the cytoplasm. It localises to the nucleus. Functionally, export receptor for importin alpha. Mediates importin-alpha re-export from the nucleus to the cytoplasm after import substrates have been released into the nucleoplasm. This chain is Exportin-2, found in Drosophila melanogaster (Fruit fly).